Reading from the N-terminus, the 325-residue chain is Probable cell division protein WhiA (325 aa).

The H-T-H motif DNA-binding region spans Ser273–Asn306.

This sequence belongs to the WhiA family.

Its function is as follows. Involved in cell division and chromosome segregation. The protein is Probable cell division protein WhiA of Parafrankia sp. (strain EAN1pec).